A 430-amino-acid polypeptide reads, in one-letter code: Tol-Pal system protein TolB (430 aa).

The N-terminal stretch at 1 to 21 (MKQALRVAFGFLMLWAAVLHA) is a signal peptide.

The protein belongs to the TolB family. The Tol-Pal system is composed of five core proteins: the inner membrane proteins TolA, TolQ and TolR, the periplasmic protein TolB and the outer membrane protein Pal. They form a network linking the inner and outer membranes and the peptidoglycan layer.

The protein localises to the periplasm. Functionally, part of the Tol-Pal system, which plays a role in outer membrane invagination during cell division and is important for maintaining outer membrane integrity. TolB occupies a key intermediary position in the Tol-Pal system because it communicates directly with both membrane-embedded components, Pal in the outer membrane and TolA in the inner membrane. The polypeptide is Tol-Pal system protein TolB (Salmonella enteritidis PT4 (strain P125109)).